We begin with the raw amino-acid sequence, 456 residues long: ATP-dependent protease ATPase subunit HslU (456 aa).

ATP contacts are provided by residues Val-18, Gly-60–Glu-65, Asp-269, Glu-334, and Arg-406.

This sequence belongs to the ClpX chaperone family. HslU subfamily. A double ring-shaped homohexamer of HslV is capped on each side by a ring-shaped HslU homohexamer. The assembly of the HslU/HslV complex is dependent on binding of ATP.

The protein localises to the cytoplasm. ATPase subunit of a proteasome-like degradation complex; this subunit has chaperone activity. The binding of ATP and its subsequent hydrolysis by HslU are essential for unfolding of protein substrates subsequently hydrolyzed by HslV. HslU recognizes the N-terminal part of its protein substrates and unfolds these before they are guided to HslV for hydrolysis. The sequence is that of ATP-dependent protease ATPase subunit HslU from Desulfosudis oleivorans (strain DSM 6200 / JCM 39069 / Hxd3) (Desulfococcus oleovorans).